We begin with the raw amino-acid sequence, 59 residues long: Potassium channel toxin alpha-KTx 3.5 (59 aa).

An N-terminal signal peptide occupies residues 1 to 22; it reads MKVFSAVLIILFVCSMIIGINA. Disulfide bonds link Cys-29-Cys-49, Cys-35-Cys-54, and Cys-39-Cys-56. Residues 47–54 are interaction with Ca(2+)-activated K(+) channels; the sequence is GKCMNGKC.

This sequence belongs to the short scorpion toxin superfamily. Potassium channel inhibitor family. Alpha-KTx 03 subfamily. In terms of tissue distribution, expressed by the venom gland.

The protein resides in the secreted. In terms of biological role, has also been shown to inhibit with high potency Kv1.3/KCNA3 and with low potency Kv1.1/KCNA1 and Kv1.2/KCNA2 voltage-gated potassium channels. Also binds and inhibits the molluscan calcium-activated potassium channels KCa (Kd=135 nM). The sequence is that of Potassium channel toxin alpha-KTx 3.5 (KTX2) from Androctonus australis (Sahara scorpion).